Reading from the N-terminus, the 435-residue chain is Keratin, type I cytoskeletal 18 (435 aa).

A head region spans residues 2–84 (SYRPGSYSVS…SVSGSGLVGN (83 aa)). The coil 1A stretch occupies residues 85 to 120 (EKETMIGLNDRLAAYLETVRNLEQANSKLEFQIREA). Residues 85–396 (EKETMIGLND…RLLDGEDFRL (312 aa)) form the IF rod domain. Positions 121–137 (LEKKGPTTRDLSPFEKT) are linker 1. The interval 138–229 (LEDLRKKVYD…QNHNQEVNDL (92 aa)) is coil 1B. The linker 12 stretch occupies residues 230-253 (RNQIAQSGVQVDVDAPKGQDLAQV). The coil 2 stretch occupies residues 254-391 (LAEVRAQYES…IATYRRLLDG (138 aa)). The tract at residues 392–435 (EDFRLQDALVDQSSTKSIKKVTVTQTLVDGKVVSESTNTKEIGK) is tail.

Belongs to the intermediate filament family. As to quaternary structure, heterotetramer of two type I and two type II keratins. Keratin-18 associates with keratin-8. In terms of processing, phosphorylated. Proteolytically cleaved by caspases during epithelial cell apoptosis.

Functionally, when phosphorylated, plays a role in filament reorganization. The chain is Keratin, type I cytoskeletal 18 from Acipenser baerii (Siberian sturgeon).